Reading from the N-terminus, the 140-residue chain is Profilin-1 (140 aa).

Ala2 carries the N-acetylalanine modification. Ser28 carries the post-translational modification Phosphoserine. A Glycyl lysine isopeptide (Lys-Gly) (interchain with G-Cter in SUMO2); alternate cross-link involves residue Lys54. Lys54 is covalently cross-linked (Glycyl lysine isopeptide (Lys-Gly) (interchain with G-Cter in ubiquitin); alternate). Ser57 carries the post-translational modification Phosphoserine. Residue Lys108 is modified to N6-acetyllysine. Tyr129 carries the post-translational modification Phosphotyrosine. Ser138 is modified (phosphoserine; by ROCK1).

The protein belongs to the profilin family. In terms of assembly, found in a complex with XPO6, Ran, ACTB and PFN1. Interacts with ACTB. Interacts with VASP. Interacts with HTT. Interacts with SH3BGRL. Occurs in many kinds of cells as a complex with monomeric actin in a 1:1 ratio. Interacts with ACTMAP. In terms of processing, phosphorylation at Ser-138 reduces its affinity for G-actin and blocks its interaction with HTT, reducing its ability to inhibit androgen receptor (AR) and HTT aggregation.

The protein localises to the cytoplasm. The protein resides in the cytoskeleton. Binds to actin and affects the structure of the cytoskeleton. At high concentrations, profilin prevents the polymerization of actin, whereas it enhances it at low concentrations. By binding to PIP2, it inhibits the formation of IP3 and DG. Inhibits androgen receptor (AR) and HTT aggregation and binding of G-actin is essential for its inhibition of AR. This chain is Profilin-1 (Pfn1), found in Mus musculus (Mouse).